We begin with the raw amino-acid sequence, 141 residues long: Hemoglobin subunit alpha (141 aa).

Positions 1-22 are disordered; the sequence is VLSEDDKNRVRTSVGKNPELPG. One can recognise a Globin domain in the interval 1-141; the sequence is VLSEDDKNRV…VSEVLESKYR (141 aa). Histidine 58 provides a ligand contact to O2. Residue histidine 87 participates in heme b binding.

It belongs to the globin family. As to quaternary structure, heterotetramer of two alpha chains and two beta chains. In terms of tissue distribution, red blood cells.

In terms of biological role, involved in oxygen transport from the lung to the various peripheral tissues. The polypeptide is Hemoglobin subunit alpha (HBA) (Vipera aspis (Aspic viper)).